We begin with the raw amino-acid sequence, 202 residues long: AFG2-interacting ribosome maturation factor (202 aa).

In terms of assembly, part of the 55LCC heterohexameric ATPase complex. Does not associate with pre-60S ribosomal particles.

It is found in the nucleus. It localises to the cytoplasm. Functionally, part of the 55LCC heterohexameric ATPase complex which is chromatin-associated and promotes replisome proteostasis to maintain replication fork progression and genome stability. Required for replication fork progression, sister chromatid cohesion, and chromosome stability. The ATPase activity is specifically enhanced by replication fork DNA and is coupled to cysteine protease-dependent cleavage of replisome substrates in response to replication fork damage. Uses ATPase activity to process replisome substrates in S-phase, facilitating their proteolytic turnover from chromatin to ensure DNA replication and mitotic fidelity. Involved in the cytoplasmic maturation steps of pre-60S ribosomal particles by promoting the release of shuttling protein RSL24D1/RLP24 from the pre-ribosomal particles. Plays an essential role in early embryonic development. This is AFG2-interacting ribosome maturation factor (airim) from Danio rerio (Zebrafish).